The sequence spans 268 residues: Undecaprenyl-diphosphatase (268 aa).

7 helical membrane passes run 43-63, 85-105, 108-128, 141-161, 184-204, 217-237, and 246-266; these read FWKTFAVLIQLGAILAILAIY, IGVLVAFLPAVILGLIFGTFI, VLFNPWVVCFSLIAGGAVLLW, AMAFPLPMYLGIGIAQCAAMV, AAEFSFFLAIPTMLGAFVYDV, FIIIVGFVVSFITAIVVVKTF, and FTFFAWWRVIVGTLGLIALAL.

This sequence belongs to the UppP family.

It localises to the cell inner membrane. The catalysed reaction is di-trans,octa-cis-undecaprenyl diphosphate + H2O = di-trans,octa-cis-undecaprenyl phosphate + phosphate + H(+). Its function is as follows. Catalyzes the dephosphorylation of undecaprenyl diphosphate (UPP). Confers resistance to bacitracin. The protein is Undecaprenyl-diphosphatase of Afipia carboxidovorans (strain ATCC 49405 / DSM 1227 / KCTC 32145 / OM5) (Oligotropha carboxidovorans).